The following is a 154-amino-acid chain: Small ribosomal subunit protein uS9 (154 aa).

A disordered region spans residues 135-154 (KESKKYGLKKARKAPQYSKR). Over residues 140-154 (YGLKKARKAPQYSKR) the composition is skewed to basic residues.

The protein belongs to the universal ribosomal protein uS9 family.

This chain is Small ribosomal subunit protein uS9, found in Salinispora arenicola (strain CNS-205).